A 55-amino-acid chain; its full sequence is Neurotoxin BmKX-A1-S31 (55 aa).

An N-terminal signal peptide occupies residues 1 to 23; the sequence is MKIFFAVLVILVLFSMLIWTAYG. Disulfide bonds link Cys30–Cys45, Cys36–Cys50, and Cys39–Cys53.

Expressed by the venom gland.

It localises to the secreted. The protein is Neurotoxin BmKX-A1-S31 of Olivierus martensii (Manchurian scorpion).